A 417-amino-acid polypeptide reads, in one-letter code: Serine hydroxymethyltransferase (417 aa).

(6S)-5,6,7,8-tetrahydrofolate is bound by residues L121 and 125–127 (GHL). The residue at position 229 (K229) is an N6-(pyridoxal phosphate)lysine. 355–357 (SPF) lines the (6S)-5,6,7,8-tetrahydrofolate pocket.

This sequence belongs to the SHMT family. As to quaternary structure, homodimer. Pyridoxal 5'-phosphate serves as cofactor.

The protein resides in the cytoplasm. The catalysed reaction is (6R)-5,10-methylene-5,6,7,8-tetrahydrofolate + glycine + H2O = (6S)-5,6,7,8-tetrahydrofolate + L-serine. Its pathway is one-carbon metabolism; tetrahydrofolate interconversion. The protein operates within amino-acid biosynthesis; glycine biosynthesis; glycine from L-serine: step 1/1. In terms of biological role, catalyzes the reversible interconversion of serine and glycine with tetrahydrofolate (THF) serving as the one-carbon carrier. This reaction serves as the major source of one-carbon groups required for the biosynthesis of purines, thymidylate, methionine, and other important biomolecules. Also exhibits THF-independent aldolase activity toward beta-hydroxyamino acids, producing glycine and aldehydes, via a retro-aldol mechanism. The protein is Serine hydroxymethyltransferase of Citrobacter koseri (strain ATCC BAA-895 / CDC 4225-83 / SGSC4696).